The following is a 478-amino-acid chain: UDP-glycosyltransferase 90A1 (478 aa).

UDP-alpha-D-glucose contacts are provided by residues Thr-289, 343 to 345 (VDQ), 360 to 368 (HCGWNSAQE), and 382 to 385 (MAEQ).

It belongs to the UDP-glycosyltransferase family.

The protein is UDP-glycosyltransferase 90A1 (UGT90A1) of Arabidopsis thaliana (Mouse-ear cress).